We begin with the raw amino-acid sequence, 108 residues long: MADPRVRQIKIKTGVVKRLVKEKVMYEKEAKQQEEKIEKMRAEDGENYAIKKQAEILQESRMMIPDCQRRLEAACTDLQQILESEKDLEEAEEYKEARLVLDSVKLEA.

Alanine 2 is subject to N-acetylalanine.

This sequence belongs to the TBCA family. In terms of assembly, supercomplex made of cofactors A to E. Cofactors A and D function by capturing and stabilizing tubulin in a quasi-native conformation. Cofactor E binds to the cofactor D-tubulin complex; interaction with cofactor C then causes the release of tubulin polypeptides that are committed to the native state.

The protein resides in the cytoplasm. Its subcellular location is the cytoskeleton. Functionally, tubulin-folding protein; involved in the early step of the tubulin folding pathway. This Oryctolagus cuniculus (Rabbit) protein is Tubulin-specific chaperone A (TBCA).